A 441-amino-acid polypeptide reads, in one-letter code: D-aminoacyl-tRNA deacylase (441 aa).

Belongs to the DtdA deacylase family. In terms of assembly, monomer. Zn(2+) serves as cofactor.

It carries out the reaction a D-aminoacyl-tRNA + H2O = a tRNA + a D-alpha-amino acid + H(+). It catalyses the reaction glycyl-tRNA(Ala) + H2O = tRNA(Ala) + glycine + H(+). D-aminoacyl-tRNA deacylase with broad substrate specificity. By recycling D-aminoacyl-tRNA to D-amino acids and free tRNA molecules, this enzyme counteracts the toxicity associated with the formation of D-aminoacyl-tRNA entities in vivo. The protein is D-aminoacyl-tRNA deacylase of Natronomonas pharaonis (strain ATCC 35678 / DSM 2160 / CIP 103997 / JCM 8858 / NBRC 14720 / NCIMB 2260 / Gabara) (Halobacterium pharaonis).